We begin with the raw amino-acid sequence, 420 residues long: Phosphoribosylamine--glycine ligase (420 aa).

Residues 108 to 314 (KQFMEKYAIP…FAALIDALLH (207 aa)) enclose the ATP-grasp domain. Position 134 to 195 (134 to 195 (LNERGVPIVI…EDFLAGEEFS (62 aa))) interacts with ATP. Positions 284 and 286 each coordinate Mg(2+).

The protein belongs to the GARS family. Mg(2+) serves as cofactor. The cofactor is Mn(2+).

It carries out the reaction 5-phospho-beta-D-ribosylamine + glycine + ATP = N(1)-(5-phospho-beta-D-ribosyl)glycinamide + ADP + phosphate + H(+). Its pathway is purine metabolism; IMP biosynthesis via de novo pathway; N(1)-(5-phospho-D-ribosyl)glycinamide from 5-phospho-alpha-D-ribose 1-diphosphate: step 2/2. In Listeria monocytogenes serovar 1/2a (strain ATCC BAA-679 / EGD-e), this protein is Phosphoribosylamine--glycine ligase.